Here is a 233-residue protein sequence, read N- to C-terminus: 7-cyano-7-deazaguanine synthase (233 aa).

Residue 8-18 (LSGGLDSTTCM) coordinates ATP. 4 residues coordinate Zn(2+): cysteine 186, cysteine 194, cysteine 197, and cysteine 200.

This sequence belongs to the QueC family. Homodimer. Zn(2+) is required as a cofactor.

The enzyme catalyses 7-carboxy-7-deazaguanine + NH4(+) + ATP = 7-cyano-7-deazaguanine + ADP + phosphate + H2O + H(+). It participates in purine metabolism; 7-cyano-7-deazaguanine biosynthesis. Functionally, catalyzes the ATP-dependent conversion of 7-carboxy-7-deazaguanine (CDG) to 7-cyano-7-deazaguanine (preQ(0)). The polypeptide is 7-cyano-7-deazaguanine synthase (Desulfitobacterium hafniense (strain DSM 10664 / DCB-2)).